We begin with the raw amino-acid sequence, 2549 residues long: Serine/threonine-protein kinase mTOR (2549 aa).

Met-1 is subject to N-acetylmethionine. An interaction with NBN region spans residues 1 to 651 (MLGTGPATAT…HVVSQTAVQV (651 aa)). HEAT repeat units follow at residues 16 to 53 (SSNV…MELR), 55 to 99 (MSQE…VEGG), 100 to 137 (NSTR…AMAG), 138 to 179 (DTFT…AISV), 180 to 220 (PTFF…LILT), 222 to 276 (QREP…RISS), 277 to 313 (MEGE…PRHI), 314 to 364 (TPFT…CCRD), 365 to 409 (LMEE…AFTD), 410 to 445 (TQYL…VAVR), 446 to 494 (SEFK…RAMG), 495 to 529 (PGIQ…RQIP), 530 to 563 (QLKK…GLAH), 564 to 596 (QLAS…EFEG), 597 to 636 (HSLT…SIHL), 637 to 683 (ISGH…DERF), 686 to 724 (HLAQ…MNPA), 727 to 766 (MPFL…NAPR), 769 to 811 (RPYM…VSGL), 814 to 853 (RKWV…STGY), 857 to 893 (PYRK…LLGA), 894 to 942 (LDPY…GNLP), 943 to 988 (LDEF…KCVQ), 989 to 1027 (FLPQ…KSHI), 1029 to 1068 (PYMD…GEFK), 1069 to 1105 (LYLP…LFGA), 1106 to 1144 (NLDD…RLTE), 1145 to 1188 (SLDF…GKKY), 1189 to 1225 (QIFI…LADE), 1226 to 1273 (EEDP…GAAR), 1274 to 1311 (RVSK…QAYN), and 1312 to 1345 (PMAR…ELAL). Phosphoserine is present on Ser-567. Residue Thr-1162 is modified to Phosphothreonine. Lys-1218 is modified (N6-acetyllysine). A Phosphoserine modification is found at Ser-1261. TPR repeat units lie at residues 1346–1382 (TSQD…GIVL), 1383–1408 (LGER…QKGP), 1409–1442 (TPAI…HFGE), 1443–1473 (LEIQ…NKDD), 1474–1507 (PELM…VNDE), 1508–1541 (TQAK…RDTH), 1542–1574 (DGAF…LDAE), 1575–1614 (LTAM…RREI), 1615–1649 (IRQI…PHED), 1650–1693 (MRTW…PTVH), 1694–1731 (PQVT…AQHA), 1732–1786 (IATE…DRSW), 1787–1846 (YKAW…STEG), 1898–1930 (NNLQ…VKAI), 1931–1970 (QIDT…YHPQ), and 1971–2005 (ALIY…SNTL). An FAT domain is found at 1382 to 1982 (LLGERAAKCR…IYPLTVASKS (601 aa)). Residues Lys-1662, Lys-1702, and Arg-1749 each contribute to the 1D-myo-inositol hexakisphosphate site. The disordered stretch occupies residues 1812-1867 (DEKKKLRHASGANITNATTTATTAASAAAATSTEGSNSESEAESNESSPTPSPLQK). The segment covering 1826–1860 (TNATTTATTAASAAAATSTEGSNSESEAESNESSP) has biased composition (low complexity). The interval 2012 to 2144 (VSEELIRVAI…DLELAVPGTY (133 aa)) is sufficient for interaction with the FKBP1A/rapamycin complex. Lys-2066 participates in a covalent cross-link: Glycyl lysine isopeptide (Lys-Gly) (interchain with G-Cter in ubiquitin). One can recognise a PI3K/PI4K catalytic domain in the interval 2156-2469 (IAPSLQVITS…GVELGEPAHK (314 aa)). Residue Ser-2159 is modified to Phosphoserine. The tract at residues 2162–2168 (VITSKQR) is G-loop. Position 2164 is a phosphothreonine (Thr-2164). Residues Ser-2165 and Gln-2167 each contribute to the ATP site. Thr-2173 carries the phosphothreonine; by PKB/AKT1 modification. 8 residues coordinate ATP: Leu-2185, Lys-2187, Glu-2190, Tyr-2225, Gly-2238, Trp-2239, Val-2240, and Thr-2245. The interaction with MLST8 stretch occupies residues 2258–2296 (KILLNIEHRIMLRMAPDYDHLTLMQKVEVFEHAVNNTAG). Positions 2335 to 2343 (GLGDRHPSN) are catalytic loop. Asn-2343 lines the Mg(2+) pocket. Residues Met-2345 and Ile-2356 each coordinate ATP. An activation loop region spans residues 2355 to 2380 (HIDFGDCFEVAMTREKFPEKIPFRLT). Asp-2357 contacts Mg(2+). At Thr-2446 the chain carries Phosphothreonine; by RPS6KB1. The residue at position 2448 (Ser-2448) is a Phosphoserine; by RPS6KB1. At Ser-2478 the chain carries Phosphoserine. At Ser-2481 the chain carries Phosphoserine; by autocatalysis. Residues 2517 to 2549 (DTLDVPTQVELLIKQATSHENLCQCYIGWCPFW) enclose the FATC domain.

Belongs to the PI3/PI4-kinase family. Part of the mechanistic target of rapamycin complex 1 (mTORC1) which contains MTOR, MLST8 and RPTOR. The mTORC1 complex is a 1 Md obligate dimer of two stoichiometric heterotetramers with overall dimensions of 290 A x 210 A x 135 A. It has a rhomboid shape and a central cavity, the dimeric interfaces are formed by interlocking interactions between the two MTOR and the two RPTOR subunits. The MLST8 subunit forms distal foot-like protuberances, and contacts only one MTOR within the complex, while the small AKT1S1/PRAS40 localizes to the midsection of the central core, in close proximity to RPTOR. mTORC1 associates with AKT1S1/PRAS40, which inhibits its activity by blocking MTOR substrate-recruitment site. Component of the mechanistic target of rapamycin complex 2 (mTORC2), consisting in two heterotretramers composed of MTOR, MLST8, RICTOR and MAPKAP1/SIN1. Interacts with PLPP7 and PML. Interacts with PRR5 and RICTOR; the interaction is direct within the mTORC2 complex and interaction with RICTOR is enhanced by deubiquitination of RICTOR by USP9X. mTORC1 and mTORC2 associate with DEPTOR, which regulates their activity. Interacts with WAC; WAC positively regulates MTOR activity by promoting the assembly of the TTT complex composed of TELO2, TTI1 and TTI2 and the RUVBL complex composed of RUVBL1 and RUVBL2 into the TTT-RUVBL complex which leads to the dimerization of the mTORC1 complex and its subsequent activation. Interacts with UBQLN1. Interacts with TTI1 and TELO2. Interacts with CLIP1; phosphorylates and regulates CLIP1. Interacts with NBN. Interacts with HTR6. Interacts with BRAT1. Interacts with MEAK7 (via C-terminal domain); the interaction increases upon nutrient stimulation. Interacts with TM4SF5; the interaction is positively regulated by arginine and is negatively regulated by leucine. Interacts with GPR137B. Interacts with NCKAP1L. Interacts with TPCN1 and TPCN2; the interaction is required for TPCN1 and TPCN2 sensitivity to ATP. Interacts with ATP6V1A and with CRYAB, forming a ternary complex. Interacts with SLC38A7; this interaction mediates the recruitment of mTORC1 to the lysosome and its subsequent activation. Interacts with TSPAN8. In terms of processing, autophosphorylates when part of mTORC1 or mTORC2. Phosphorylation at Ser-1261, Ser-2159 and Thr-2164 promotes autophosphorylation. Phosphorylated at Ser-2448 by RPS6KB1. Phosphorylation in the kinase domain modulates the interactions of MTOR with RPTOR and AKT1S1/PRAS40 and leads to increased intrinsic mTORC1 kinase activity. Phosphorylation at Ser-2159 by TBK1 in response to growth factors and pathogen recognition receptors promotes mTORC1 activity. Phosphorylation at Ser-2159 by TBK1 in response to EGF growth factor promotes mTORC2 activity, leading to AKT1 phosphorylation and activation. Phosphorylation at Thr-2173 in the ATP-binding region by AKT1 strongly reduces kinase activity. Ubiquitinated at Lys-2066 by the SCF(FBXO22) complex via 'Lys-27'-linked ubiquitination prevents mTORC1 substrate recruitment.

It localises to the lysosome membrane. The protein localises to the endoplasmic reticulum membrane. The protein resides in the golgi apparatus membrane. Its subcellular location is the cell membrane. It is found in the mitochondrion outer membrane. It localises to the cytoplasm. The protein localises to the nucleus. The protein resides in the PML body. Its subcellular location is the microsome membrane. It is found in the cytoplasmic vesicle. It localises to the phagosome. The catalysed reaction is L-seryl-[protein] + ATP = O-phospho-L-seryl-[protein] + ADP + H(+). It catalyses the reaction L-threonyl-[protein] + ATP = O-phospho-L-threonyl-[protein] + ADP + H(+). It carries out the reaction L-tyrosyl-[protein] + ATP = O-phospho-L-tyrosyl-[protein] + ADP + H(+). The mTORC1 complex is activated in response to nutrients, growth factors or amino acids: activation requires relocalization of the mTORC1 complex to lysosomes that is mediated by the Ragulator complex, SLC38A9, and the Rag GTPases RagA/RRAGA, RagB/RRAGB, RagC/RRAGC and RagD/RRAGD. Activation of mTORC1 by growth factors such as insulin involves AKT1-mediated phosphorylation of TSC1-TSC2, which leads to the activation of the RHEB GTPase a potent activator of the protein kinase activity of mTORC1. Insulin-stimulated and amino acid-dependent phosphorylation at Ser-1261 promotes autophosphorylation and the activation of mTORC1. On the other hand, low cellular energy levels can inhibit mTORC1 through activation of PRKAA1 while hypoxia inhibits mTORC1 through a REDD1-dependent mechanism which may also require PRKAA1. The kinase activity of MTOR within the mTORC1 complex is positively regulated by MLST8. The kinase activity of MTOR is inhibited by DEPTOR and AKT1S1. The non-canonical mTORC1 complex is independent of the RHEB GTPase and specifically mediates phosphorylation of MiT/TFE factors TFEB and TFE3 but not other mTORC1 substrates: it is activated by FLCN, which activates Rag GTPases RagC/RRAGC and RagD/RRAGD. MTOR is the target of the immunosuppressive and anti-cancer drug rapamycin which acts in complex with FKBP1A/FKBP12, and specifically inhibits its kinase activity. mTORC2 is also activated by growth factors, but seems to be nutrient-insensitive. mTORC2 associates and is directly activated by ribosomes. mTORC2 may also be regulated by RHEB but in an indirect manner through the PI3K signaling pathway. In terms of biological role, serine/threonine protein kinase which is a central regulator of cellular metabolism, growth and survival in response to hormones, growth factors, nutrients, energy and stress signals. MTOR directly or indirectly regulates the phosphorylation of at least 800 proteins. Functions as part of 2 structurally and functionally distinct signaling complexes mTORC1 and mTORC2 (mTOR complex 1 and 2). In response to nutrients, growth factors or amino acids, mTORC1 is recruited to the lysosome membrane and promotes protein, lipid and nucleotide synthesis by phosphorylating key regulators of mRNA translation and ribosome synthesis. This includes phosphorylation of EIF4EBP1 and release of its inhibition toward the elongation initiation factor 4E (eiF4E). Moreover, phosphorylates and activates RPS6KB1 and RPS6KB2 that promote protein synthesis by modulating the activity of their downstream targets including ribosomal protein S6, eukaryotic translation initiation factor EIF4B, and the inhibitor of translation initiation PDCD4. Stimulates the pyrimidine biosynthesis pathway, both by acute regulation through RPS6KB1-mediated phosphorylation of the biosynthetic enzyme CAD, and delayed regulation, through transcriptional enhancement of the pentose phosphate pathway which produces 5-phosphoribosyl-1-pyrophosphate (PRPP), an allosteric activator of CAD at a later step in synthesis, this function is dependent on the mTORC1 complex. Regulates ribosome synthesis by activating RNA polymerase III-dependent transcription through phosphorylation and inhibition of MAF1 an RNA polymerase III-repressor. Activates dormant ribosomes by mediating phosphorylation of SERBP1, leading to SERBP1 inactivation and reactivation of translation. In parallel to protein synthesis, also regulates lipid synthesis through SREBF1/SREBP1 and LPIN1. To maintain energy homeostasis mTORC1 may also regulate mitochondrial biogenesis through regulation of PPARGC1A. In the same time, mTORC1 inhibits catabolic pathways: negatively regulates autophagy through phosphorylation of ULK1. Under nutrient sufficiency, phosphorylates ULK1 at 'Ser-758', disrupting the interaction with AMPK and preventing activation of ULK1. Also prevents autophagy through phosphorylation of the autophagy inhibitor DAP. Also prevents autophagy by phosphorylating RUBCNL/Pacer under nutrient-rich conditions. Prevents autophagy by mediating phosphorylation of AMBRA1, thereby inhibiting AMBRA1 ability to mediate ubiquitination of ULK1 and interaction between AMBRA1 and PPP2CA. mTORC1 exerts a feedback control on upstream growth factor signaling that includes phosphorylation and activation of GRB10 a INSR-dependent signaling suppressor. Among other potential targets mTORC1 may phosphorylate CLIP1 and regulate microtubules. The mTORC1 complex is inhibited in response to starvation and amino acid depletion. The non-canonical mTORC1 complex, which acts independently of RHEB, specifically mediates phosphorylation of MiT/TFE factors TFEB and TFE3 in the presence of nutrients, promoting their cytosolic retention and inactivation. Upon starvation or lysosomal stress, inhibition of mTORC1 induces dephosphorylation and nuclear translocation of TFEB and TFE3, promoting their transcription factor activity. The mTORC1 complex regulates pyroptosis in macrophages by promoting GSDMD oligomerization. MTOR phosphorylates RPTOR which in turn inhibits mTORC1. As part of the mTORC2 complex, MTOR transduces signals from growth factors to pathways involved in proliferation, cytoskeletal organization, lipogenesis and anabolic output. In response to growth factors, mTORC2 phosphorylates and activates AGC protein kinase family members, including AKT (AKT1, AKT2 and AKT3), PKC (PRKCA, PRKCB and PRKCE) and SGK1. In contrast to mTORC1, mTORC2 is nutrient-insensitive. mTORC2 plays a critical role in AKT1 activation by mediating phosphorylation of different sites depending on the context, such as 'Thr-450', 'Ser-473', 'Ser-477' or 'Thr-479', facilitating the phosphorylation of the activation loop of AKT1 on 'Thr-308' by PDPK1/PDK1 which is a prerequisite for full activation. mTORC2 also regulates the phosphorylation of SGK1 at 'Ser-422'. mTORC2 may regulate the actin cytoskeleton, through phosphorylation of PRKCA, PXN and activation of the Rho-type guanine nucleotide exchange factors RHOA and RAC1A or RAC1B. The mTORC2 complex also phosphorylates various proteins involved in insulin signaling, such as FBXW8 and IGF2BP1. May also regulate insulin signaling by acting as a tyrosine protein kinase that catalyzes phosphorylation of IGF1R and INSR. Regulates osteoclastogenesis by adjusting the expression of CEBPB isoforms. Plays an important regulatory role in the circadian clock function; regulates period length and rhythm amplitude of the suprachiasmatic nucleus (SCN) and liver clocks. This is Serine/threonine-protein kinase mTOR from Rattus norvegicus (Rat).